The chain runs to 697 residues: Portal protein (697 aa).

The interval 633-697 (MSREAAGGVP…RRAGGPYGFH (65 aa)) is disordered. A compositionally biased stretch (basic and acidic residues) spans 664–689 (ITADEERRGPERVGRFRNGGPDDPRR).

This sequence belongs to the herpesviridae portal protein family. In terms of assembly, homododecamerizes. Interacts with terminase subunits TRM1 and TRM3.

It is found in the virion. The protein resides in the host nucleus. In terms of biological role, forms a portal in the viral capsid through which viral DNA is translocated during DNA packaging. Assembles as a dodecamer at a single fivefold axe of the T=16 icosahedric capsid. Binds to the molecular motor that translocates the viral DNA, termed terminase. The sequence is that of Portal protein (UL104) from Homo sapiens (Human).